We begin with the raw amino-acid sequence, 256 residues long: 5'-nucleotidase SurE (256 aa).

4 residues coordinate a divalent metal cation: Asp8, Asp9, Ser39, and Asn95.

This sequence belongs to the SurE nucleotidase family. A divalent metal cation is required as a cofactor.

The protein localises to the cytoplasm. It carries out the reaction a ribonucleoside 5'-phosphate + H2O = a ribonucleoside + phosphate. Functionally, nucleotidase that shows phosphatase activity on nucleoside 5'-monophosphates. The chain is 5'-nucleotidase SurE from Methanosphaera stadtmanae (strain ATCC 43021 / DSM 3091 / JCM 11832 / MCB-3).